An 82-amino-acid polypeptide reads, in one-letter code: Sec-independent protein translocase protein TatA (82 aa).

A helical membrane pass occupies residues 1-21 (MGIFDWKHWIVILIVVVLVFG). Residues 43–82 (VNTEEDDKKEQPAAQPAQPLNQPHTIDAQAQKVEEPARKD) are disordered.

This sequence belongs to the TatA/E family. In terms of assembly, the Tat system comprises two distinct complexes: a TatABC complex, containing multiple copies of TatA, TatB and TatC subunits, and a separate TatA complex, containing only TatA subunits. Substrates initially bind to the TatABC complex, which probably triggers association of the separate TatA complex to form the active translocon.

It is found in the cell inner membrane. Its function is as follows. Part of the twin-arginine translocation (Tat) system that transports large folded proteins containing a characteristic twin-arginine motif in their signal peptide across membranes. TatA could form the protein-conducting channel of the Tat system. The polypeptide is Sec-independent protein translocase protein TatA (Pseudomonas paraeruginosa (strain DSM 24068 / PA7) (Pseudomonas aeruginosa (strain PA7))).